A 1769-amino-acid polypeptide reads, in one-letter code: Tight junction protein 1 (1769 aa).

One can recognise a PDZ 1 domain in the interval 23-110; sequence TVTLHRAPGF…NAKITIRRKK (88 aa). The span at 102–112 shows a compositional bias: basic residues; that stretch reads AKITIRRKKKV. The segment at 102 to 188 is disordered; that stretch reads AKITIRRKKK…QPPKPTKVTL (87 aa). Residues 123–135 are compositionally biased toward acidic residues; it reads PVSENEDSYDEEV. Residue Ser-125 is modified to Phosphoserine. Residue Tyr-131 is modified to Phosphotyrosine. Basic and acidic residues predominate over residues 148–174; the sequence is RRSEKSWARDRSASRERSLSPRSDRRS. Phosphoserine occurs at positions 174, 177, and 178. Phosphothreonine is present on Thr-184. In terms of domain architecture, PDZ 2 spans 185-263; that stretch reads KVTLVKSRKN…KLKMVVQRDE (79 aa). A phosphoserine mark is found at Ser-211 and Ser-240. Thr-266 is modified (phosphothreonine). Ser-274, Ser-276, Ser-279, Ser-283, Ser-289, Ser-293, Ser-296, Ser-299, Ser-322, Ser-328, Ser-333, Ser-336, and Ser-352 each carry phosphoserine. The disordered stretch occupies residues 295 to 362; the sequence is ASDHSGRSHD…TPVKHADDHT (68 aa). The span at 298 to 326 shows a compositional bias: basic and acidic residues; it reads HSGRSHDRPPRHSRSRSPDQRSEPSDHSR. Position 353 is a phosphothreonine (Thr-353). The PDZ 3 domain occupies 420–501; sequence SMKLVKFRKG…GEEVTILAQK (82 aa). Residues 515-583 form the SH3 domain; sequence GDSFYIRTHF…PNKNRAEQLA (69 aa). The region spanning 609–790 is the Guanylate kinase-like domain; sequence SKRNLRKSRE…WYGALKEAIQ (182 aa). Phosphoserine is present on residues Ser-616 and Ser-621. The interval 632–875 is occludin (OCLN)-binding region; that stretch reads YERVVLREAG…GTPPESAITR (244 aa). Position 808 is a phosphothreonine (Thr-808). Phosphoserine is present on residues Ser-809 and Ser-820. Tyr-821 carries the phosphotyrosine modification. Residues Ser-823, Ser-827, and Ser-836 each carry the phosphoserine modification. Disordered stretches follow at residues 824–976 and 1010–1067; these read APGS…LRTP and EMMR…SYTD. Thr-845, Thr-847, Thr-853, Thr-860, and Thr-867 each carry phosphothreonine. A compositionally biased stretch (basic and acidic residues) spans 878–891; that stretch reads EPVREDSSGMHHEN. Low complexity predominate over residues 892–905; the sequence is QTYPPYSPQAQPQP. The residue at position 911 (Ser-911) is a Phosphoserine. Polar residues-rich tracts occupy residues 933-952 and 962-976; these read PETNPASSTSAVNHNVTLTN and PSTSYSPQADSLRTP. Ser-967 is subject to Phosphoserine. A Phosphoserine modification is found at Ser-1070. 3 disordered regions span residues 1091 to 1212, 1224 to 1261, and 1273 to 1589; these read SYYD…KAGH, PLIPASQHKPEVLPSNTKPLPPPPTLTEEEEDPAMKPQ, and KRSA…EFDS. The span at 1108–1124 shows a compositional bias: basic and acidic residues; that stretch reads QHPRDLDSRQHPEESSE. Position 1138 is a phosphoserine (Ser-1138). Phosphotyrosine occurs at positions 1139 and 1164. Residues 1150–1370 form an actin-binding region (ABR) region; the sequence is RTSTLRHEEQ…FDRRSFENKP (221 aa). The segment covering 1273 to 1286 has biased composition (basic and acidic residues); the sequence is KRSASLENKKDENH. The span at 1300-1310 shows a compositional bias: pro residues; the sequence is PGAPIIGPKPT. The segment covering 1335–1346 has biased composition (basic and acidic residues); it reads PPEDIVRSNHYD. Phosphotyrosine is present on Tyr-1353. Ser-1365 bears the Phosphoserine mark. Residues 1387–1401 show a composition bias toward polar residues; the sequence is HSQNQTNFSSYSSKG. The segment covering 1402–1419 has biased composition (basic and acidic residues); that stretch reads KSPEADAPDRSFGEKRYE. Ser-1412 bears the Phosphoserine mark. Polar residues-rich tracts occupy residues 1460–1471 and 1514–1523; these read NSISLDFQNSLV and AEQTQKTVTP. Positions 1539–1548 are enriched in basic and acidic residues; the sequence is PFERKFESPK. Phosphoserine is present on residues Ser-1546 and Ser-1618. The region spanning 1635 to 1769 is the ZU5 domain; it reads ATARGVFNNN…NCVSVLIDHF (135 aa).

This sequence belongs to the MAGUK family. Homodimer. Forms heterodimers TJP3. Forms a heterodimer (via PDZ2 domain) with TJP2/ZO2 (via PDZ2 domain). Interacts with OCLN. Interacts with CALM, claudins, CGN/cingulin, CXADR, GJA12, GJD3 and UBN1. Interacts (via ZU5 domain) with CDC42BPB and MYZAP. Interacts (via PDZ domain) with GJA1. Interacts (via PDZ domains) with ANKRD2. Interacts with POPDC1 (via the C-terminus cytoplasmic tail). Interacts with HSPA4. Interacts with KIRREL1. Interacts with DLL1. Interacts with USP53 (via the C-terminal region). Interacts with DNMBP (via C-terminal domain); required for the apical cell-cell junction localization of DNMBP. Interacts with SPEF1. Interacts (via N-terminus) with CTNNA1. Interacts with CLDN18. Interacts with CLDN16 (via TRV motif); this is a prerequisite for anchoring of CLDN16 at the tight junction. Interacts with PKP1; the interaction facilitates TJP1/ZO-1 localization to the plasma membrane. Interacts with PATJ (via PDZ1-6 domains); the interaction is required for attachment and extension of TJP1/ZO1 condensates along the apical cell interface. Post-translationally, phosphorylated at tyrosine redidues in response to epidermal growth factor (EGF). This response is dependent on an intact actin microfilament system. Dephosphorylated by PTPRJ.

It is found in the cell membrane. The protein resides in the cell junction. It localises to the tight junction. The protein localises to the gap junction. In terms of biological role, TJP1, TJP2, and TJP3 are closely related scaffolding proteins that link tight junction (TJ) transmembrane proteins such as claudins, junctional adhesion molecules, and occludin to the actin cytoskeleton. Forms a multistranded TJP1/ZO1 condensate which elongates to form a tight junction belt, the belt is anchored at the apical cell membrane via interaction with PATJ. The tight junction acts to limit movement of substances through the paracellular space and as a boundary between the compositionally distinct apical and basolateral plasma membrane domains of epithelial and endothelial cells. Necessary for lumenogenesis, and particularly efficient epithelial polarization and barrier formation. Plays a role in the regulation of cell migration by targeting CDC42BPBb to the leading edge of migrating cells. With TJP2 and TJP3, participates in the junctional retention and stability of the transcription factor DBPA, but is not involved in its shuttling to the nucleus. May play a role in mediating cell morphology changes during ameloblast differentiation via its role in tight junctions. This is Tight junction protein 1 from Canis lupus familiaris (Dog).